Consider the following 425-residue polypeptide: C2H2 type master regulator of conidiophore development brlA (425 aa).

Disordered regions lie at residues 28 to 72, 232 to 257, and 281 to 301; these read MASS…RHTG, KTHSPTTPVRSCSLGTTSGTDTPMSR, and VQRQPSRKVARKQSSKQSLSL. Low complexity predominate over residues 30–44; that stretch reads SSFSPMESPTPTPTS. Polar residues predominate over residues 232–256; that stretch reads KTHSPTTPVRSCSLGTTSGTDTPMS. Residues 285 to 294 are compositionally biased toward basic residues; sequence PSRKVARKQS. 2 consecutive C2H2-type zinc fingers follow at residues 321–345 and 351–376; these read KGRFKRQEHLKRHMKSHSKEKPHVC and ERAFSRSDNLNAHYTKTHSKRGGRNR. A compositionally biased stretch (basic residues) spans 365–374; the sequence is TKTHSKRGGR. The interval 365–425 is disordered; that stretch reads TKTHSKRGGR…RETSEEAWLE (61 aa).

The protein resides in the nucleus. Functionally, brlA, abaA and wetA are pivotal regulators of conidiophore development and conidium maturation. They act individually and together to regulate their own expression and that of numerous other sporulation-specific genes. Binds promoters of target genes at brlA response elements (BREs) containing the conserved sequence 5'-(C/A)(A/G)AGGG(G/A)-3'. Also coordinates the expression of carbohydrate-active enzymes and of the key effectors of cell wall remodeling during autolysis. The protein is C2H2 type master regulator of conidiophore development brlA of Aspergillus niger (strain ATCC MYA-4892 / CBS 513.88 / FGSC A1513).